We begin with the raw amino-acid sequence, 263 residues long: Ribosomal RNA small subunit methyltransferase A (263 aa).

S-adenosyl-L-methionine-binding residues include asparagine 20, leucine 22, glycine 47, glutamate 68, aspartate 90, and asparagine 111.

It belongs to the class I-like SAM-binding methyltransferase superfamily. rRNA adenine N(6)-methyltransferase family. RsmA subfamily.

Its subcellular location is the cytoplasm. The catalysed reaction is adenosine(1518)/adenosine(1519) in 16S rRNA + 4 S-adenosyl-L-methionine = N(6)-dimethyladenosine(1518)/N(6)-dimethyladenosine(1519) in 16S rRNA + 4 S-adenosyl-L-homocysteine + 4 H(+). Its function is as follows. Specifically dimethylates two adjacent adenosines (A1518 and A1519) in the loop of a conserved hairpin near the 3'-end of 16S rRNA in the 30S particle. May play a critical role in biogenesis of 30S subunits. The polypeptide is Ribosomal RNA small subunit methyltransferase A (Chlorobium chlorochromatii (strain CaD3)).